The chain runs to 366 residues: Chalcone synthase B (366 aa).

The active site involves C172.

Belongs to the thiolase-like superfamily. Chalcone/stilbene synthases family.

It catalyses the reaction (E)-4-coumaroyl-CoA + 3 malonyl-CoA + 3 H(+) = 2',4,4',6'-tetrahydroxychalcone + 3 CO2 + 4 CoA. It functions in the pathway secondary metabolite biosynthesis; flavonoid biosynthesis. Functionally, the primary product of this enzyme is 4,2',4',6'-tetrahydroxychalcone (also termed naringenin-chalcone or chalcone) which can under specific conditions spontaneously isomerize into naringenin. This is Chalcone synthase B (CHSB) from Ipomoea triloba (Trilobed morning glory).